The sequence spans 121 residues: MARIAGVDIPRDKRVVISLTYVFGIGRTTAEKILAEAGVSEETRVRDLTEDELGRIRDIIDRIKVEGDLRREVSLNIKRLMEIGSYRGLRHRRGLPVRGQNSKNNARTRKGPRRTVANKKK.

Residues His91–Lys121 are disordered. Over residues Ala106–Lys121 the composition is skewed to basic residues.

This sequence belongs to the universal ribosomal protein uS13 family. Part of the 30S ribosomal subunit. Forms a loose heterodimer with protein S19. Forms two bridges to the 50S subunit in the 70S ribosome.

In terms of biological role, located at the top of the head of the 30S subunit, it contacts several helices of the 16S rRNA. In the 70S ribosome it contacts the 23S rRNA (bridge B1a) and protein L5 of the 50S subunit (bridge B1b), connecting the 2 subunits; these bridges are implicated in subunit movement. Contacts the tRNAs in the A and P-sites. This Bacillus cereus (strain AH187) protein is Small ribosomal subunit protein uS13.